The sequence spans 121 residues: Large ribosomal subunit protein bL12 (121 aa).

Belongs to the bacterial ribosomal protein bL12 family. As to quaternary structure, homodimer. Part of the ribosomal stalk of the 50S ribosomal subunit. Forms a multimeric L10(L12)X complex, where L10 forms an elongated spine to which 2 to 4 L12 dimers bind in a sequential fashion. Binds GTP-bound translation factors.

In terms of biological role, forms part of the ribosomal stalk which helps the ribosome interact with GTP-bound translation factors. Is thus essential for accurate translation. This chain is Large ribosomal subunit protein bL12, found in Klebsiella pneumoniae (strain 342).